The chain runs to 53 residues: Conotoxin Cal9.2f (53 aa).

Positions 1-6 (KKGVTL) are excised as a propeptide. Cystine bridges form between C15/C32, C20/C42, and C22/C47.

In terms of tissue distribution, expressed by the venom duct.

Its subcellular location is the secreted. Its function is as follows. Probable neurotoxin with unknown target. Possibly targets ion channels. In Californiconus californicus (California cone), this protein is Conotoxin Cal9.2f.